Consider the following 721-residue polypeptide: YTH domain-containing protein 1 (721 aa).

The segment covering 29–38 (EADIAEELQD) has biased composition (acidic residues). The tract at residues 29-239 (EADIAEELQD…GGGTHSHSQK (211 aa)) is disordered. A compositionally biased stretch (low complexity) spans 48–75 (SESNGGDSSDSEPSISSVSTATSSLAGS). The segment covering 135–151 (ASDKVKSKSPDTEDRQP) has biased composition (basic and acidic residues). A YTH domain is found at 254–391 (TRFFLIKSNN…KIGGELCRLF (138 aa)). RNA is bound by residues 260-262 (KSN), tryptophan 276, and tryptophan 327. Disordered stretches follow at residues 424-471 (PPRS…RHHH), 580-605 (DGPGAPPLPDYPPPQRPPPPGFDKAP), and 651-721 (AGGG…DNRR). Residues 432–443 (GHGGGGRGGGRG) are compositionally biased toward gly residues. The span at 451–471 (PMRHKRSYHGAPHHRPYRHHH) shows a compositional bias: basic residues. A compositionally biased stretch (pro residues) spans 583-600 (GAPPLPDYPPPQRPPPPG). The span at 651-670 (AGGGMGAGGGSGGGMGGPGG) shows a compositional bias: gly residues. Residues 699–708 (RDSRPFRERG) show a composition bias toward basic and acidic residues.

It is found in the nucleus. Its function is as follows. Regulator of alternative splicing that specifically recognizes and binds N6-methyladenosine (m6A)-containing RNAs. Acts by acting as a reader of m6A methylation. Required for sex determination and dosage compensation via Sxl alternative splicing: m6A methylation acts as a key regulator of Sxl pre-mRNA and promotes female-specific alternative splicing of Sxl, which determines female physiognomy. M6A methylation is also required for neuronal functions. This is YTH domain-containing protein 1 from Drosophila melanogaster (Fruit fly).